The primary structure comprises 353 residues: Photosystem II protein D1 (353 aa).

At threonine 2 the chain carries N-acetylthreonine. Threonine 2 carries the phosphothreonine modification. Helical transmembrane passes span 29–46 (YIGW…TATS), 118–133 (HFLL…EWEL), and 142–156 (WIAV…AAAA). A chlorophyll a-binding site is contributed by histidine 118. Tyrosine 126 is a pheophytin a binding site. [CaMn4O5] cluster-binding residues include aspartate 170 and glutamate 189. The chain crosses the membrane as a helical span at residues 197–218 (FHMLGVAGVFGGSLFSAMHGSL). A chlorophyll a-binding site is contributed by histidine 198. A quinone-binding positions include histidine 215 and 264-265 (SF). Histidine 215 lines the Fe cation pocket. Histidine 272 serves as a coordination point for Fe cation. Residues 274 to 288 (FLAAWPVVGIWFTAL) form a helical membrane-spanning segment. Residues histidine 332, glutamate 333, aspartate 342, and alanine 344 each coordinate [CaMn4O5] cluster. A propeptide spanning residues 345–353 (AVEAPSING) is cleaved from the precursor.

Belongs to the reaction center PufL/M/PsbA/D family. As to quaternary structure, PSII is composed of 1 copy each of membrane proteins PsbA, PsbB, PsbC, PsbD, PsbE, PsbF, PsbH, PsbI, PsbJ, PsbK, PsbL, PsbM, PsbT, PsbX, PsbY, PsbZ, Psb30/Ycf12, at least 3 peripheral proteins of the oxygen-evolving complex and a large number of cofactors. It forms dimeric complexes. Requires The D1/D2 heterodimer binds P680, chlorophylls that are the primary electron donor of PSII, and subsequent electron acceptors. It shares a non-heme iron and each subunit binds pheophytin, quinone, additional chlorophylls, carotenoids and lipids. D1 provides most of the ligands for the Mn4-Ca-O5 cluster of the oxygen-evolving complex (OEC). There is also a Cl(-1) ion associated with D1 and D2, which is required for oxygen evolution. The PSII complex binds additional chlorophylls, carotenoids and specific lipids. as cofactor. Tyr-161 forms a radical intermediate that is referred to as redox-active TyrZ, YZ or Y-Z. Post-translationally, C-terminally processed by CTPA; processing is essential to allow assembly of the oxygen-evolving complex and thus photosynthetic growth.

It is found in the plastid. It localises to the chloroplast thylakoid membrane. The catalysed reaction is 2 a plastoquinone + 4 hnu + 2 H2O = 2 a plastoquinol + O2. Functionally, photosystem II (PSII) is a light-driven water:plastoquinone oxidoreductase that uses light energy to abstract electrons from H(2)O, generating O(2) and a proton gradient subsequently used for ATP formation. It consists of a core antenna complex that captures photons, and an electron transfer chain that converts photonic excitation into a charge separation. The D1/D2 (PsbA/PsbD) reaction center heterodimer binds P680, the primary electron donor of PSII as well as several subsequent electron acceptors. This chain is Photosystem II protein D1, found in Vitis vinifera (Grape).